Consider the following 83-residue polypeptide: UPF0298 protein SERP0712 (83 aa).

It belongs to the UPF0298 family.

It localises to the cytoplasm. This Staphylococcus epidermidis (strain ATCC 35984 / DSM 28319 / BCRC 17069 / CCUG 31568 / BM 3577 / RP62A) protein is UPF0298 protein SERP0712.